The chain runs to 381 residues: Protein kinase gsk31 (381 aa).

Residues 25–309 (YEPCRVLGSG…AIEVLTHPFF (285 aa)) form the Protein kinase domain. ATP contacts are provided by residues 31–39 (LGSGSFGVV) and K54. D150 acts as the Proton acceptor in catalysis. A Phosphoserine modification is found at S184. Position 185 is a phosphotyrosine (Y185).

This sequence belongs to the protein kinase superfamily. CMGC Ser/Thr protein kinase family. GSK-3 subfamily.

The enzyme catalyses L-seryl-[protein] + ATP = O-phospho-L-seryl-[protein] + ADP + H(+). It catalyses the reaction L-threonyl-[protein] + ATP = O-phospho-L-threonyl-[protein] + ADP + H(+). The protein is Protein kinase gsk31 (gsk31) of Schizosaccharomyces pombe (strain 972 / ATCC 24843) (Fission yeast).